A 430-amino-acid chain; its full sequence is Adenylosuccinate synthetase (430 aa).

Residues 13 to 19 (GDEGKGK) and 41 to 43 (GHT) each bind GTP. The active-site Proton acceptor is aspartate 14. Mg(2+) is bound by residues aspartate 14 and glycine 41. IMP-binding positions include 14–17 (DEGK), 39–42 (NAGH), threonine 130, arginine 144, glutamine 225, threonine 240, and arginine 304. Histidine 42 (proton donor) is an active-site residue. 300–306 (ATTGRKR) contributes to the substrate binding site. GTP is bound by residues arginine 306, 332–334 (KLD), and 414–416 (STG).

The protein belongs to the adenylosuccinate synthetase family. Homodimer. It depends on Mg(2+) as a cofactor.

The protein localises to the cytoplasm. The catalysed reaction is IMP + L-aspartate + GTP = N(6)-(1,2-dicarboxyethyl)-AMP + GDP + phosphate + 2 H(+). The protein operates within purine metabolism; AMP biosynthesis via de novo pathway; AMP from IMP: step 1/2. Its function is as follows. Plays an important role in the de novo pathway of purine nucleotide biosynthesis. Catalyzes the first committed step in the biosynthesis of AMP from IMP. This is Adenylosuccinate synthetase from Teredinibacter turnerae (strain ATCC 39867 / T7901).